Here is a 439-residue protein sequence, read N- to C-terminus: Xaa-Pro dipeptidase (439 aa).

The Mn(2+) site is built by aspartate 244, aspartate 255, histidine 335, glutamate 380, and glutamate 419.

The protein belongs to the peptidase M24B family. Bacterial-type prolidase subfamily. Requires Mn(2+) as cofactor.

The catalysed reaction is Xaa-L-Pro dipeptide + H2O = an L-alpha-amino acid + L-proline. Splits dipeptides with a prolyl residue in the C-terminal position. The sequence is that of Xaa-Pro dipeptidase from Shewanella sediminis (strain HAW-EB3).